The sequence spans 109 residues: Nucleoid-associated protein AHA_2212 (109 aa).

Disordered regions lie at residues 1–23 (MFGK…RMQK) and 88–109 (NKSK…KMPF). Low complexity predominate over residues 11-23 (MKQAQQMQERMQK).

Belongs to the YbaB/EbfC family. In terms of assembly, homodimer.

The protein localises to the cytoplasm. It localises to the nucleoid. Its function is as follows. Binds to DNA and alters its conformation. May be involved in regulation of gene expression, nucleoid organization and DNA protection. The chain is Nucleoid-associated protein AHA_2212 from Aeromonas hydrophila subsp. hydrophila (strain ATCC 7966 / DSM 30187 / BCRC 13018 / CCUG 14551 / JCM 1027 / KCTC 2358 / NCIMB 9240 / NCTC 8049).